A 389-amino-acid polypeptide reads, in one-letter code: Cellobiose 2-epimerase (389 aa).

It belongs to the cellobiose 2-epimerase family. As to quaternary structure, monomer.

It carries out the reaction D-cellobiose = beta-D-glucosyl-(1-&gt;4)-D-mannopyranose. Its function is as follows. Catalyzes the reversible epimerization of cellobiose to 4-O-beta-D-glucopyranosyl-D-mannose (Glc-Man). Catalyzes epimerization but also isomerization for beta-1,4- and alpha-1,4-gluco-oligosaccharides. Can use cellobiose, lactose, cellotriose, maltose and maltotriose. The sequence is that of Cellobiose 2-epimerase from Dictyoglomus turgidum (strain DSM 6724 / Z-1310).